Consider the following 158-residue polypeptide: Cyclic pyranopterin monophosphate synthase (158 aa).

Residues 75–77 (LCH) and 113–114 (ME) contribute to the substrate site. Asp-128 is an active-site residue.

The protein belongs to the MoaC family. In terms of assembly, homohexamer; trimer of dimers.

It catalyses the reaction (8S)-3',8-cyclo-7,8-dihydroguanosine 5'-triphosphate = cyclic pyranopterin phosphate + diphosphate. The protein operates within cofactor biosynthesis; molybdopterin biosynthesis. In terms of biological role, catalyzes the conversion of (8S)-3',8-cyclo-7,8-dihydroguanosine 5'-triphosphate to cyclic pyranopterin monophosphate (cPMP). The sequence is that of Cyclic pyranopterin monophosphate synthase from Histophilus somni (strain 129Pt) (Haemophilus somnus).